The following is a 196-amino-acid chain: MNMIWVCGVDEAGRGPLVGAVVAGAVVLDPENPIEGLKDSKKLSAVRREFLYEQIMEKAKAWGVGEASPTEIDSINILQATMLAMRRAVEDLAARLGEWPSKALIDGNRCPELSIAAEAIVKGDTKEPAISAASIVAKVTRDRQMIALHEQHPQYGFSQHMGYPTEAHFAALKQYGVCTEHRKSFAPVRRVLEGSF.

Positions 4-196 (IWVCGVDEAG…PVRRVLEGSF (193 aa)) constitute an RNase H type-2 domain. A divalent metal cation is bound by residues aspartate 10, glutamate 11, and aspartate 106.

This sequence belongs to the RNase HII family. Mn(2+) is required as a cofactor. It depends on Mg(2+) as a cofactor.

The protein localises to the cytoplasm. It carries out the reaction Endonucleolytic cleavage to 5'-phosphomonoester.. Its function is as follows. Endonuclease that specifically degrades the RNA of RNA-DNA hybrids. This Polynucleobacter asymbioticus (strain DSM 18221 / CIP 109841 / QLW-P1DMWA-1) (Polynucleobacter necessarius subsp. asymbioticus) protein is Ribonuclease HII.